Here is a 298-residue protein sequence, read N- to C-terminus: ADP-ribosyl cyclase/cyclic ADP-ribose hydrolase 1 (298 aa).

Residues 1 to 21 (MPDYEFSPASGDRPRSWISKQ) are Cytoplasmic-facing. The helical; Signal-anchor for type II membrane protein transmembrane segment at 22 to 42 (VLIVLGVCLPVILALAIWVGV) threads the bilayer. Residues 43–298 (LTWRQSSMGA…PEHPSCSVLM (256 aa)) lie on the Extracellular side of the membrane. Intrachain disulfides connect cysteine 64/cysteine 80, cysteine 97/cysteine 178, and cysteine 158/cysteine 171. N-linked (GlcNAc...) asparagine glycosylation occurs at asparagine 98. Cysteine 117 is a catalytic residue. N-linked (GlcNAc...) asparagine glycosylation occurs at asparagine 118. Asparagine 177 is a glycosylation site (N-linked (GlcNAc...) asparagine). Residue cysteine 199 is part of the active site. N-linked (GlcNAc...) asparagine glycosylation is found at asparagine 207 and asparagine 268. 2 cysteine pairs are disulfide-bonded: cysteine 252-cysteine 273 and cysteine 285-cysteine 294.

The protein belongs to the ADP-ribosyl cyclase family. In terms of assembly, homodimer. Osteoclasts.

The protein resides in the cell membrane. It localises to the microsome membrane. It is found in the endoplasmic reticulum membrane. It carries out the reaction NAD(+) = cyclic ADP-beta-D-ribose + nicotinamide + H(+). The enzyme catalyses 2'-phospho-cyclic ADP-ribose + nicotinate = nicotinate-adenine dinucleotide phosphate. It catalyses the reaction NAD(+) + H2O = ADP-D-ribose + nicotinamide + H(+). The catalysed reaction is nicotinate + NADP(+) = nicotinate-adenine dinucleotide phosphate + nicotinamide. Functionally, synthesizes cyclic ADP-ribose (cADPR), a second messenger for glucose-induced insulin secretion. Synthesizes the Ca(2+) mobilizer nicotinate-adenine dinucleotide phosphate, NAADP(+), from 2'-phospho-cADPR and nicotinic acid, as well as from NADP(+) and nicotinic acid. Also has cADPR hydrolase activity. The protein is ADP-ribosyl cyclase/cyclic ADP-ribose hydrolase 1 (CD38) of Oryctolagus cuniculus (Rabbit).